The sequence spans 177 residues: Inorganic pyrophosphatase (177 aa).

Residues Lys34, Arg48, and Tyr60 each coordinate substrate. Asp70, Asp75, and Asp107 together coordinate Mg(2+). Tyr144 is a substrate binding site.

Belongs to the PPase family. In terms of assembly, homohexamer. Mg(2+) is required as a cofactor.

The protein localises to the cytoplasm. The catalysed reaction is diphosphate + H2O = 2 phosphate + H(+). Its function is as follows. Catalyzes the hydrolysis of inorganic pyrophosphate (PPi) forming two phosphate ions. This Picrophilus torridus (strain ATCC 700027 / DSM 9790 / JCM 10055 / NBRC 100828 / KAW 2/3) protein is Inorganic pyrophosphatase.